The sequence spans 1671 residues: Fatty acid synthase alpha subunit aflA (1671 aa).

The interval 40-60 is disordered; it reads ITEEAPTEQPPLSTPPSLPQT. Over residues 47–58 the composition is skewed to pro residues; it reads EQPPLSTPPSLP. The Carrier domain maps to 75–153; it reads DVALSRVQIV…DANPTVQLGK (79 aa). Residue Ser-113 is modified to O-(pantetheine 4'-phosphoryl)serine. A ketoreductase (KR) domain region spans residues 492–729; that stretch reads GKTFLVTGAG…AMLLTPDFVA (238 aa). In terms of domain architecture, Ketosynthase family 3 (KS3) spans 926-1428; sequence MEVLQEVAVE…QKGGQVVGVA (503 aa). The active-site For beta-ketoacyl synthase activity is Cys-1113. Positions 1244-1270 are enriched in low complexity; it reads SMISVTSRPSSRSSTSSEVSDKSSLTS. A disordered region spans residues 1244 to 1288; sequence SMISVTSRPSSRSSTSSEVSDKSSLTSITSISNPAPRAQRARSTT. Active-site for beta-ketoacyl synthase activity residues include His-1313 and His-1354. A disordered region spans residues 1497–1521; that stretch reads PSTGQYRFRSDATPALDDDALPPPG. Asp-1552 contacts Mg(2+). Acetyl-CoA is bound by residues 1552-1554, 1598-1608, 1622-1625, and 1652-1654; these read DLV, EAVFKCLQTHS, HGGN, and ISY. Residue Ser-1653 coordinates Mg(2+).

The protein belongs to the thiolase-like superfamily. Fungal fatty acid synthetase subunit alpha family. In terms of assembly, [Alpha(6)beta(6)] hexamers of two multifunctional subunits (alpha and beta). In terms of processing, 4'-phosphopantetheine is transferred from CoA to a specific serine of the acyl carrier domain by the C-terminal PPT domain. This modification is essential for activity because fatty acids are bound in thioester linkage to the sulfhydryl of the prosthetic group.

It carries out the reaction acetyl-CoA + n malonyl-CoA + 2n NADPH + 4n H(+) = a long-chain-acyl-CoA + n CoA + n CO2 + 2n NADP(+).. The catalysed reaction is a fatty acyl-[ACP] + malonyl-[ACP] + H(+) = a 3-oxoacyl-[ACP] + holo-[ACP] + CO2. It catalyses the reaction a (3R)-hydroxyacyl-[ACP] + NADP(+) = a 3-oxoacyl-[ACP] + NADPH + H(+). Its pathway is mycotoxin biosynthesis; aflatoxin biosynthesis. Its function is as follows. Fatty acid synthase alpha subunit; part of the gene cluster that mediates the biosynthesis of aflatoxins, a group of polyketide-derived furanocoumarins, and part of the most toxic and carcinogenic compounds among the known mycotoxins. The four major aflatoxins produced by A.parasiticus are aflatoxin B1 (AFB1), aflatoxin B2 (AFB2), aflatoxin G1 (AFG1) and aflatoxin G2 (AFG2). Within the aflatoxin pathway, the fungal fatty acid synthase aflA/aflB provides the hexanoyl starter unit to the acyl-carrier protein (ACP) domain of the norsolorinic acid synthase to allow the first step of the pathway. The biosynthesis of aflatoxins begins with the norsolorinic acid synthase aflC that combines a hexanoyl starter unit produced by the fatty acid synthase aflA/aflB and 7 malonyl-CoA extender units to synthesize the precursor NOR. The second step is the conversion of NOR to averantin (AVN) and requires the norsolorinic acid ketoreductase aflD, which catalyzes the dehydration of norsolorinic acid to form (1'S)-averantin. The norsolorinic acid reductases aflE and aflF may also play a role in the conversion of NOR to AVN. The cytochrome P450 monooxygenase aflG then catalyzes the hydroxylation of AVN to 5'hydroxyaverantin (HAVN). The next step is performed by the 5'-hydroxyaverantin dehydrogenase aflH that transforms HAVN to 5'-oxoaverantin (OAVN) which is further converted to averufin (AVF) by aflK that plays a dual role in the pathway, as a 5'-oxoaverantin cyclase that mediates conversion of 5'-oxoaverantin, as well as a versicolorin B synthase in a later step in the pathway. The averufin oxidase aflI catalyzes the conversion of AVF to versiconal hemiacetal acetate (VHA). VHA is then the substrate for the versiconal hemiacetal acetate esterase aflJ to yield versiconal (VAL). Versicolorin B synthase aflK then converts VAL to versicolorin B (VERB) by closing the bisfuran ring of aflatoxin which is required for DNA-binding, thus giving to aflatoxin its activity as a mutagen. Then, the activity of the versicolorin B desaturase aflL leads to versicolorin A (VERA). A branch point starts from VERB since it can also be converted to dihydrodemethylsterigmatocystin (DMDHST), probably also by aflL, VERA being a precursor for aflatoxins B1 and G1, and DMDHST for aflatoxins B2 and G2. Next, the versicolorin reductase aflM and the cytochrome P450 monooxygenase aflN are involved in conversion of VERA to demethylsterigmatocystin (DMST). AflX and aflY seem also involved in this step, through probable aflX-mediated epoxide ring-opening step following versicolorin A oxidation and aflY-mediated Baeyer-Villiger oxidation required for the formation of the xanthone ring. The methyltransferase aflO then leads to the modification of DMST to sterigmatocystin (ST), and of DMDHST to dihydrosterigmatocystin (DHST). Both ST and DHST are then substrates of the O-methyltransferase aflP to yield O-methylsterigmatocystin (OMST) and dihydro-O-methylsterigmatocystin (DHOMST), respectively. Finally OMST is converted to aflatoxins B1 and G1, and DHOMST to aflatoxins B2 and G2, via the action of several enzymes including O-methylsterigmatocystin oxidoreductase aflQ, the cytochrome P450 monooxygenase aflU, but also the NADH-dependent flavin oxidoreductase nadA which is specifically required for the synthesis of AFG1. The polypeptide is Fatty acid synthase alpha subunit aflA (Aspergillus parasiticus (strain ATCC 56775 / NRRL 5862 / SRRC 143 / SU-1)).